The following is a 195-amino-acid chain: Molybdenum cofactor guanylyltransferase (195 aa).

Residues 10–12 (LAG), Lys23, Asn51, Asp69, and Asp99 contribute to the GTP site. Residue Asp99 coordinates Mg(2+).

Belongs to the MobA family. As to quaternary structure, monomer. Requires Mg(2+) as cofactor.

Its subcellular location is the cytoplasm. It catalyses the reaction Mo-molybdopterin + GTP + H(+) = Mo-molybdopterin guanine dinucleotide + diphosphate. In terms of biological role, transfers a GMP moiety from GTP to Mo-molybdopterin (Mo-MPT) cofactor (Moco or molybdenum cofactor) to form Mo-molybdopterin guanine dinucleotide (Mo-MGD) cofactor. This chain is Molybdenum cofactor guanylyltransferase, found in Histophilus somni (strain 129Pt) (Haemophilus somnus).